The sequence spans 122 residues: Large ribosomal subunit protein uL14c (122 aa).

This sequence belongs to the universal ribosomal protein uL14 family. Part of the 50S ribosomal subunit.

Its subcellular location is the plastid. The protein resides in the chloroplast. Binds to 23S rRNA. This is Large ribosomal subunit protein uL14c from Manihot esculenta (Cassava).